Consider the following 562-residue polypeptide: NAD-dependent malic enzyme (562 aa).

The active-site Proton donor is Tyr101. Arg154 lines the NAD(+) pocket. The active-site Proton acceptor is Lys172. Positions 243, 244, and 267 each coordinate a divalent metal cation. NAD(+)-binding residues include Asp267 and Asn415.

The protein belongs to the malic enzymes family. Homotetramer. The cofactor is Mg(2+). It depends on Mn(2+) as a cofactor.

It carries out the reaction (S)-malate + NAD(+) = pyruvate + CO2 + NADH. It catalyses the reaction oxaloacetate + H(+) = pyruvate + CO2. The polypeptide is NAD-dependent malic enzyme (Aliivibrio fischeri (strain ATCC 700601 / ES114) (Vibrio fischeri)).